A 520-amino-acid polypeptide reads, in one-letter code: Signal peptide peptidase-like 2A (520 aa).

Residues 1–25 (MGPQRRLSPAGAALLWGFLLQLTAA) form the signal peptide. Topologically, residues 26 to 172 (QEAILHASGN…PSWPNFDYTM (147 aa)) are lumenal. N-linked (GlcNAc...) asparagine glycans are attached at residues Asn58, Asn66, Asn74, Asn116, Asn126, and Asn149. The PA domain maps to 63–151 (SLMNLTSTPL…YKDFRDMNQT (89 aa)). Residue Asn155 is glycosylated (N-linked (GlcNAc...) (complex) asparagine). A helical membrane pass occupies residues 173–193 (VVIFVIAVFTVALGGYWSGLV). Over 194–220 (ELENLKAVTTEDREMRKKKEEYLTFSP) the chain is Cytoplasmic. The helical transmembrane segment at 221 to 241 (LTVVIFVVICCVMMVLLYFFY) threads the bilayer. Residues 242–247 (KWLVYV) are Lumenal-facing. Residues 248–268 (MIAIFCIASAMSLYNCLAALI) form a helical membrane-spanning segment. The Cytoplasmic portion of the chain corresponds to 269–285 (HKIPYGQCTIACRGKNM). The chain crosses the membrane as a helical span at residues 286–306 (EVRLIFLSGLCIAVAVVWAVF). Residues 307 to 311 (RNEDR) lie on the Lumenal side of the membrane. Residues 312-332 (WAWILQDILGIAFCLNLIKTL) traverse the membrane as a helical segment. The Cytoplasmic segment spans residues 333–340 (KLPNFKSC). Residues 341–361 (VILLGLLLLYDVFFVFITPFI) form a helical membrane-spanning segment. Asp351 is an active-site residue. Topologically, residues 362–399 (TKNGESIMVELAAGPFGNNEKLPVVIRVPKLIYFSVMS) are lumenal. The chain crosses the membrane as a helical span at residues 400–420 (VCLMPVSILGFGDIIVPGLLI). Asp412 is a catalytic residue. Topologically, residues 421–437 (AYCRRFDVQTGSSYIYY) are cytoplasmic. The helical transmembrane segment at 438 to 458 (VSSTVAYAIGMILTFVVLVLM) threads the bilayer. Residues 459–460 (KK) are Lumenal-facing. A helical membrane pass occupies residues 461-481 (GQPALLYLVPCTLITASVVAW). The PAL motif lies at 463–465 (PAL). The Cytoplasmic segment spans residues 482–520 (RRKEMKKFWKGNSYQMMDHLDCATNEENPVISGEQIVQQ). The YXXo lysosomal targeting motif motif lies at 495-498 (YQMM).

The protein belongs to the peptidase A22B family. In terms of assembly, interacts with ITM2B. Post-translationally, glycosylated. In terms of tissue distribution, ubiquitous.

Its subcellular location is the late endosome membrane. The protein localises to the lysosome membrane. It localises to the membrane. Functionally, intramembrane-cleaving aspartic protease (I-CLiP) that cleaves type II membrane signal peptides in the hydrophobic plane of the membrane. Functions in FASLG, ITM2B and TNF processing. Catalyzes the intramembrane cleavage of the anchored fragment of shed TNF-alpha (TNF), which promotes the release of the intracellular domain (ICD) for signaling to the nucleus. Also responsible for the intramembrane cleavage of Fas antigen ligand FASLG, which promotes the release of the intracellular FasL domain (FasL ICD). Essential for degradation of the invariant chain CD74 that plays a central role in the function of antigen-presenting cells in the immune system. Plays a role in the regulation of innate and adaptive immunity. Catalyzes the intramembrane cleavage of the simian foamy virus envelope glycoprotein gp130 independently of prior ectodomain shedding by furin or furin-like proprotein convertase (PC)-mediated cleavage proteolysis. The protein is Signal peptide peptidase-like 2A of Homo sapiens (Human).